A 199-amino-acid chain; its full sequence is Putative acetyltransferase SAR2635 (199 aa).

Belongs to the transferase hexapeptide repeat family.

The protein is Putative acetyltransferase SAR2635 of Staphylococcus aureus (strain MRSA252).